The chain runs to 289 residues: MQANVQAITEAGTSRFVTVKDGDTEFRIHCNDTGAGAETVVMLHGSGPGATGWANFNRNVEPLVAAGYRVLLVDCPGWGKSDPVVNAGSRSELNGRVLKGVLDELDIERVHILGNSMGGHSAVAFALANPQRVGKLVLMGGGTGGPSLYAPMPTEGIKLLNGLYREPSIENLKRMMNVFVYDASSLTDDLMQARLDNMLARRDHLENFVKSLAANPKQFTDYGSRLGEITAPTLVIWGRDDRFVPMDVGLRLIAGIPNAQMHIFNRCGHWAQWEHAKAFNRMVVDFLGN.

His269 functions as the Proton acceptor in the catalytic mechanism.

It belongs to the AB hydrolase superfamily. MhpC family. In terms of assembly, homodimer.

It carries out the reaction (2Z,4E)-2-hydroxy-6-oxonona-2,4-dienedioate + H2O = (2Z)-2-hydroxypenta-2,4-dienoate + succinate + H(+). The catalysed reaction is (2Z,4E,7E)-2-hydroxy-6-oxonona-2,4,7-trienedioate + H2O = (2Z)-2-hydroxypenta-2,4-dienoate + fumarate + H(+). Its pathway is aromatic compound metabolism; 3-phenylpropanoate degradation. In terms of biological role, catalyzes the cleavage of the C5-C6 bond of 2-hydroxy-6-oxononadienedioate and 2-hydroxy-6-oxononatrienedioate, a dienol ring fission product of the bacterial meta-cleavage pathway for degradation of phenylpropionic acid. The sequence is that of 2-hydroxy-6-oxononadienedioate/2-hydroxy-6-oxononatrienedioate hydrolase from Cupriavidus pinatubonensis (strain JMP 134 / LMG 1197) (Cupriavidus necator (strain JMP 134)).